The primary structure comprises 386 residues: Mannitol-1-phosphate 5-dehydrogenase (386 aa).

Position 4-15 (4-15) interacts with NAD(+); sequence ALHFGAGNIGRG.

It belongs to the mannitol dehydrogenase family.

It catalyses the reaction D-mannitol 1-phosphate + NAD(+) = beta-D-fructose 6-phosphate + NADH + H(+). The sequence is that of Mannitol-1-phosphate 5-dehydrogenase from Caldanaerobacter subterraneus subsp. tengcongensis (strain DSM 15242 / JCM 11007 / NBRC 100824 / MB4) (Thermoanaerobacter tengcongensis).